The chain runs to 492 residues: B3 domain-containing protein REM3 (492 aa).

A DNA-binding region (TF-B3 1) is located at residues 12-104 (NRPFFVRSLA…VFHVTPSGRS (93 aa)). The span at 105–116 (FSQIRTSSSSGD) shows a compositional bias: low complexity. The segment at 105 to 134 (FSQIRTSSSSGDYDSDDDDDEAGDDDSDSK) is disordered. The segment covering 117 to 131 (YDSDDDDDEAGDDDS) has biased composition (acidic residues). 2 DNA-binding regions (TF-B3) span residues 154–250 (YCLL…LCFK) and 286–382 (FLTV…FCSE). Residues 385-395 (IEQEEAPEERG) are compositionally biased toward basic and acidic residues. The segment at 385–427 (IEQEEAPEERGTPLPKRARVSAEVGHSRRTQAPNKSSDDPKIL) is disordered.

It is found in the nucleus. This Arabidopsis thaliana (Mouse-ear cress) protein is B3 domain-containing protein REM3 (REM3).